We begin with the raw amino-acid sequence, 292 residues long: Phosphoribulokinase, plasmid (292 aa).

12-20 is an ATP binding site; that stretch reads GSSGAGTTS.

Belongs to the phosphoribulokinase family. As to quaternary structure, homooctamer.

The enzyme catalyses D-ribulose 5-phosphate + ATP = D-ribulose 1,5-bisphosphate + ADP + H(+). The protein operates within carbohydrate biosynthesis; Calvin cycle. In Cupriavidus necator (strain ATCC 17699 / DSM 428 / KCTC 22496 / NCIMB 10442 / H16 / Stanier 337) (Ralstonia eutropha), this protein is Phosphoribulokinase, plasmid (cfxP).